Consider the following 280-residue polypeptide: MQNKQNQFELEKGIHTDFQEEMSYAGYLQLDKILSSQQRLSNHHDEMLFIIIHQTSELWMKLILHEMEAAIQCILDDDLEPSFKMFARISRIQQQLIQSWSVLSTLTPSEYMEFRECLGHASGFQSYQNRLIEFALGQKNAHVLPVFQHDPEIYEKMTRALHSPSVYDAAIKALAVRGLPIDEDVLHRDYSQTYQPNASVEEAWLTVYRNVDRYWDLYELAEKLVDIGSQQQTWRYMHMNTVERIIGYKKGTGGSSGVSYLKKSLDRSFFPELWTLRTKL.

Residues 49–53 (FIIIH), Tyr-111, and Arg-115 each bind substrate. Heme is bound at residue His-238. Residue Thr-252 coordinates substrate.

Belongs to the tryptophan 2,3-dioxygenase family. In terms of assembly, homotetramer. Heme is required as a cofactor.

It carries out the reaction L-tryptophan + O2 = N-formyl-L-kynurenine. It participates in amino-acid degradation; L-tryptophan degradation via kynurenine pathway; L-kynurenine from L-tryptophan: step 1/2. In terms of biological role, heme-dependent dioxygenase that catalyzes the oxidative cleavage of the L-tryptophan (L-Trp) pyrrole ring and converts L-tryptophan to N-formyl-L-kynurenine. Catalyzes the oxidative cleavage of the indole moiety. This Geobacillus thermodenitrificans (strain NG80-2) protein is Tryptophan 2,3-dioxygenase.